Here is a 351-residue protein sequence, read N- to C-terminus: Nitronate monooxygenase (351 aa).

Residues leucine 21, asparagine 69, glutamine 176, glycine 181, glycine 218, and 237–240 (QMGT) each bind FMN.

It belongs to the nitronate monooxygenase family. NMO class I subfamily. It depends on FMN as a cofactor.

The catalysed reaction is 3 propionate 3-nitronate + 3 O2 + H2O = 3 3-oxopropanoate + 2 nitrate + nitrite + H2O2 + 3 H(+). Nitronate monooxygenase that uses molecular oxygen to catalyze the oxidative denitrification of alkyl nitronates. The toxin propionate 3-nitronate (P3N) is the best substrate (and the presumed physiological substrate), but this enzyme is also active on other primary and secondary nitronates such as propyl-1-nitronate, ethylnitronate, pentyl-1-nitronate, butyl-1-nitronate and propyl-2-nitronate. Is likely involved in the degradation of P3N, that allows P.aeruginosa PAO1 to grow on 3-nitropropionate/P3N as the sole nitrogen source. Also functions in the detoxification of P3N, a metabolic poison produced by plants and fungi as a defense mechanism. Cannot oxidize nitroalkanes such as 3-nitropropionate, nitroethane, 1-nitropropane, 1-nitrobutane, 1-nitropentane, or 2-nitropropane. In Pseudomonas aeruginosa (strain ATCC 15692 / DSM 22644 / CIP 104116 / JCM 14847 / LMG 12228 / 1C / PRS 101 / PAO1), this protein is Nitronate monooxygenase.